The sequence spans 780 residues: Cyclin-F (780 aa).

Residues 20–28 (KRRIKRRPR) carry the Nuclear localization signal 1 motif. The region spanning 29–76 (NLTILSLPEDVLFHILKWLSVGDILAVRAVHSHLKYLVDNHASVWASA) is the F-box domain. In terms of domain architecture, Cyclin N-terminal spans 288–405 (QASQAVNKQQ…EIISALEGKI (118 aa)). 3 consecutive short sequence motifs (d box) follow at residues 310–313 (RYIL), 343–346 (RRRL), and 349–352 (RYKL). Disordered regions lie at residues 544–594 (QESP…AELS), 651–733 (QESS…STKP), and 745–780 (CRPP…FLKL). Residues 568 to 574 (RRSKRKR) carry the Nuclear localization signal 2 motif. The tract at residues 582-761 (RGSFVTTPTA…ESGAHQQPVK (180 aa)) is PEST. Positions 585 to 594 (FVTTPTAELS) are enriched in polar residues. Low complexity-rich tracts occupy residues 695–708 (SGYS…PISS) and 719–731 (STSV…HSST). Positions 762 to 765 (RQNL) match the D box 4 motif.

Belongs to the cyclin family. Cyclin AB subfamily. Component of the SCF(CCNF) complex consisting of CUL1, RBX1, SKP1 and CCNF. Interacts with SKP1. Interacts with CUL1. Interacts with CCNB1; interaction is required for nuclear localization of CCNB1. Interacts with CCP110; this interaction leads to CCP110 ubiquitination and degradation via the proteasome pathway. Interacts (via the Cyclin N-terminal domain) with MYBL2/BMYB. Interacts with FZR1/CDH1 (via N-terminus). Interacts with RRM2 (via Cy motif and when phosphorylated at 'Thr-33'); the interaction occurs exclusively in G2 and early M. Interacts with CDC6 (via Cy motif); the interaction takes place during G2 and M phase. In terms of processing, degraded when the spindle assembly checkpoint is activated during the G2-M transition. Degradation is not dependent on the proteasome or ubiquitin and depends on the C-terminal PEST sequence. Phosphorylated just before cells enter into mitosis. Post-translationally, ubiquitinated by the anaphase-promoting complex (APC/C); leading to its degradation by the proteasome.

The protein localises to the nucleus. Its subcellular location is the cytoplasm. It localises to the perinuclear region. The protein resides in the cytoskeleton. It is found in the microtubule organizing center. The protein localises to the centrosome. Its subcellular location is the centriole. Substrate recognition component of a SCF (SKP1-CUL1-F-box protein) E3 ubiquitin-protein ligase complex which mediates the ubiquitination and subsequent proteasomal degradation of target proteins. The SCF(CCNF) E3 ubiquitin-protein ligase complex is an integral component of the ubiquitin proteasome system (UPS) and links proteasome degradation to the cell cycle. Mediates the substrate recognition and the proteasomal degradation of various target proteins involved in the regulation of cell cycle progression and in the maintenance of genome stability. Mediates the ubiquitination and subsequent proteasomal degradation of CP110 during G2 phase, thereby acting as an inhibitor of centrosome reduplication. In G2, mediates the ubiquitination and proteasomal degradation of CDC6, thereby suppressing DNA re-replication and preventing genome instability. Involved in the ubiquitination and degradation of the substrate adapter CDH1 of the anaphase-promoting complex (APC/C), thereby acting as an antagonist of APC/C in regulating G1 progression and S phase entry. May play a role in the G2 cell cycle checkpoint control after DNA damage, possibly by promoting the ubiquitination of MYBL2/BMYB. The protein is Cyclin-F (Ccnf) of Rattus norvegicus (Rat).